The following is a 181-amino-acid chain: Protein Ves (181 aa).

It belongs to the Ves family.

The polypeptide is Protein Ves (Cronobacter sakazakii (strain ATCC BAA-894) (Enterobacter sakazakii)).